Reading from the N-terminus, the 256-residue chain is 4-hydroxy-tetrahydrodipicolinate reductase (256 aa).

NAD(+) is bound at residue 8–13 (GATGRV). An NADP(+)-binding site is contributed by lysine 36. NAD(+) is bound by residues 89–91 (GTT) and 113–116 (ATNM). Histidine 145 serves as the catalytic Proton donor/acceptor. Histidine 146 is a (S)-2,3,4,5-tetrahydrodipicolinate binding site. Lysine 149 (proton donor) is an active-site residue. A (S)-2,3,4,5-tetrahydrodipicolinate-binding site is contributed by 155 to 156 (GT).

It belongs to the DapB family.

The protein localises to the cytoplasm. It catalyses the reaction (S)-2,3,4,5-tetrahydrodipicolinate + NAD(+) + H2O = (2S,4S)-4-hydroxy-2,3,4,5-tetrahydrodipicolinate + NADH + H(+). The enzyme catalyses (S)-2,3,4,5-tetrahydrodipicolinate + NADP(+) + H2O = (2S,4S)-4-hydroxy-2,3,4,5-tetrahydrodipicolinate + NADPH + H(+). Its pathway is amino-acid biosynthesis; L-lysine biosynthesis via DAP pathway; (S)-tetrahydrodipicolinate from L-aspartate: step 4/4. In terms of biological role, catalyzes the conversion of 4-hydroxy-tetrahydrodipicolinate (HTPA) to tetrahydrodipicolinate. This chain is 4-hydroxy-tetrahydrodipicolinate reductase, found in Wolinella succinogenes (strain ATCC 29543 / DSM 1740 / CCUG 13145 / JCM 31913 / LMG 7466 / NCTC 11488 / FDC 602W) (Vibrio succinogenes).